Reading from the N-terminus, the 154-residue chain is MELTTRTIAARKHIALVSHDHCKKSLLAWVMENRDLLAQHELYATGTTGNLVQKATGIDVHCLLSGPMGGDQEVGALISEKKIDILIFFWDPLNAVPHDPDVKALLRLATVWNIPVATNRSTADFLIGSTLFSSEVTIAIPDYDRYMQQRLDLK.

An MGS-like domain is found at 1–154 (MELTTRTIAA…RYMQQRLDLK (154 aa)). Substrate contacts are provided by residues His19, Lys23, 45–48 (TGTT), and 65–66 (SG). The Proton donor/acceptor role is filled by Asp71. His98 contacts substrate.

This sequence belongs to the methylglyoxal synthase family.

The catalysed reaction is dihydroxyacetone phosphate = methylglyoxal + phosphate. Catalyzes the formation of methylglyoxal from dihydroxyacetone phosphate. The sequence is that of Methylglyoxal synthase from Yersinia pseudotuberculosis serotype O:1b (strain IP 31758).